A 132-amino-acid chain; its full sequence is Large-conductance mechanosensitive channel (132 aa).

2 helical membrane-spanning segments follow: residues 10 to 30 (FAVK…SAFG) and 76 to 96 (GNFI…FLAI).

The protein belongs to the MscL family. As to quaternary structure, homopentamer.

Its subcellular location is the cell inner membrane. Functionally, channel that opens in response to stretch forces in the membrane lipid bilayer. May participate in the regulation of osmotic pressure changes within the cell. The chain is Large-conductance mechanosensitive channel from Campylobacter hominis (strain ATCC BAA-381 / DSM 21671 / CCUG 45161 / LMG 19568 / NCTC 13146 / CH001A).